Consider the following 134-residue polypeptide: Large ribosomal subunit protein eL27 (134 aa).

The 36-residue stretch at 5 to 40 (LKSGKVVVVLSGRFAGKKAVIVRNFDDGTSSRPYGH) folds into the KOW domain.

The protein belongs to the eukaryotic ribosomal protein eL27 family.

The protein is Large ribosomal subunit protein eL27 (RPL27) of Pyrobotrys stellatus (Green alga).